Reading from the N-terminus, the 332-residue chain is Malate dehydrogenase, cytoplasmic (332 aa).

NAD(+) is bound by residues Gln16–Ile17, Asp43, and Gly90. Position 99 (Arg99) interacts with oxaloacetate. Residues Gln113 and Asn132 each coordinate NAD(+). Positions 132, 163, 188, and 243 each coordinate oxaloacetate. His188 serves as the catalytic Proton acceptor.

The protein belongs to the LDH/MDH superfamily. MDH type 2 family. As to quaternary structure, homodimer.

The protein localises to the cytoplasm. It catalyses the reaction (S)-malate + NAD(+) = oxaloacetate + NADH + H(+). This Beta vulgaris (Sugar beet) protein is Malate dehydrogenase, cytoplasmic (NR1).